The chain runs to 470 residues: Chromosomal replication initiator protein DnaA (470 aa).

Residues M1–I89 are domain I, interacts with DnaA modulators. A domain II region spans residues I89–P130. Residues H131 to S348 form a domain III, AAA+ region region. 4 residues coordinate ATP: G176, G178, K179, and T180. The segment at T349–A470 is domain IV, binds dsDNA.

It belongs to the DnaA family. Oligomerizes as a right-handed, spiral filament on DNA at oriC.

It is found in the cytoplasm. Its function is as follows. Plays an essential role in the initiation and regulation of chromosomal replication. ATP-DnaA binds to the origin of replication (oriC) to initiate formation of the DNA replication initiation complex once per cell cycle. Binds the DnaA box (a 9 base pair repeat at the origin) and separates the double-stranded (ds)DNA. Forms a right-handed helical filament on oriC DNA; dsDNA binds to the exterior of the filament while single-stranded (ss)DNA is stabiized in the filament's interior. The ATP-DnaA-oriC complex binds and stabilizes one strand of the AT-rich DNA unwinding element (DUE), permitting loading of DNA polymerase. After initiation quickly degrades to an ADP-DnaA complex that is not apt for DNA replication. Binds acidic phospholipids. This Bacteroides thetaiotaomicron (strain ATCC 29148 / DSM 2079 / JCM 5827 / CCUG 10774 / NCTC 10582 / VPI-5482 / E50) protein is Chromosomal replication initiator protein DnaA.